The following is a 340-amino-acid chain: Phospho-N-acetylmuramoyl-pentapeptide-transferase (340 aa).

10 helical membrane-spanning segments follow: residues 3–23, 53–73, 79–99, 119–139, 144–164, 176–196, 200–220, 227–247, 250–270, and 315–335; these read MSLIAGVAAFVLTVLAMPHFI, GGTVFLVVAILISLIFNFHVF, AYGATAGILFVILIYGIIGFL, MALQIVAGLLFYFIHVLPSGT, IGGLTIQLGVFYVLFVLFWIV, IDGLASVSVVISLIAYGIIAF, ELAILTIIITMIGALLGFFVF, VFMGDVGSLSLGAMLAVISIA, VEWTLLLIGVVYVLETASVML, and VDAFLWTIGALASSITLWMVL.

Belongs to the glycosyltransferase 4 family. MraY subfamily. Mg(2+) is required as a cofactor.

The protein localises to the cell membrane. It catalyses the reaction UDP-N-acetyl-alpha-D-muramoyl-L-alanyl-gamma-D-glutamyl-L-lysyl-D-alanyl-D-alanine + di-trans,octa-cis-undecaprenyl phosphate = Mur2Ac(oyl-L-Ala-gamma-D-Glu-L-Lys-D-Ala-D-Ala)-di-trans,octa-cis-undecaprenyl diphosphate + UMP. It functions in the pathway cell wall biogenesis; peptidoglycan biosynthesis. Its function is as follows. Catalyzes the initial step of the lipid cycle reactions in the biosynthesis of the cell wall peptidoglycan: transfers peptidoglycan precursor phospho-MurNAc-pentapeptide from UDP-MurNAc-pentapeptide onto the lipid carrier undecaprenyl phosphate, yielding undecaprenyl-pyrophosphoryl-MurNAc-pentapeptide, known as lipid I. In Streptococcus thermophilus (strain ATCC BAA-250 / LMG 18311), this protein is Phospho-N-acetylmuramoyl-pentapeptide-transferase.